The primary structure comprises 263 residues: Small ribosomal subunit protein eS4 (263 aa).

Residues 42–104 (LPLIIFLRNR…TGEHFRLVYD (63 aa)) enclose the S4 RNA-binding domain.

It belongs to the eukaryotic ribosomal protein eS4 family.

In Gallus gallus (Chicken), this protein is Small ribosomal subunit protein eS4 (RPS4).